A 237-amino-acid polypeptide reads, in one-letter code: Phosphoribosylaminoimidazole-succinocarboxamide synthase (237 aa).

It belongs to the SAICAR synthetase family.

It catalyses the reaction 5-amino-1-(5-phospho-D-ribosyl)imidazole-4-carboxylate + L-aspartate + ATP = (2S)-2-[5-amino-1-(5-phospho-beta-D-ribosyl)imidazole-4-carboxamido]succinate + ADP + phosphate + 2 H(+). It participates in purine metabolism; IMP biosynthesis via de novo pathway; 5-amino-1-(5-phospho-D-ribosyl)imidazole-4-carboxamide from 5-amino-1-(5-phospho-D-ribosyl)imidazole-4-carboxylate: step 1/2. The polypeptide is Phosphoribosylaminoimidazole-succinocarboxamide synthase (Yersinia pseudotuberculosis serotype O:1b (strain IP 31758)).